Here is a 671-residue protein sequence, read N- to C-terminus: tRNA(Met) cytidine acetyltransferase TmcA (671 aa).

Residues Gln-180, 202 to 211 (GRGKSALAGQ), and Arg-319 each bind ATP. One can recognise an N-acetyltransferase domain in the interval 356–531 (QTLWRSEPET…SGCYTAMALL (176 aa)). Acetyl-CoA-binding positions include 461–463 (IAV), 468–474 (QREGTGR), Glu-499, and Arg-506.

It belongs to the RNA cytidine acetyltransferase family. TmcA subfamily.

Its subcellular location is the cytoplasm. The catalysed reaction is cytidine(34) in elongator tRNA(Met) + acetyl-CoA + ATP + H2O = N(4)-acetylcytidine(34) in elongator tRNA(Met) + ADP + phosphate + CoA + H(+). In terms of biological role, catalyzes the formation of N(4)-acetylcytidine (ac(4)C) at the wobble position of tRNA(Met), by using acetyl-CoA as an acetyl donor and ATP (or GTP). The polypeptide is tRNA(Met) cytidine acetyltransferase TmcA (Shigella flexneri serotype 5b (strain 8401)).